Here is a 244-residue protein sequence, read N- to C-terminus: Adenosine 5'-phosphosulfate reductase (244 aa).

[4Fe-4S] cluster is bound by residues Cys-129, Cys-130, Cys-212, and Cys-215. Cys-240 functions as the Nucleophile; cysteine thiosulfonate intermediate in the catalytic mechanism.

This sequence belongs to the PAPS reductase family. CysH subfamily. Requires [4Fe-4S] cluster as cofactor.

It is found in the cytoplasm. The catalysed reaction is [thioredoxin]-disulfide + sulfite + AMP + 2 H(+) = adenosine 5'-phosphosulfate + [thioredoxin]-dithiol. It functions in the pathway sulfur metabolism; hydrogen sulfide biosynthesis; sulfite from sulfate. In terms of biological role, catalyzes the formation of sulfite from adenosine 5'-phosphosulfate (APS) using thioredoxin as an electron donor. This chain is Adenosine 5'-phosphosulfate reductase, found in Neisseria meningitidis serogroup A / serotype 4A (strain DSM 15465 / Z2491).